We begin with the raw amino-acid sequence, 189 residues long: 2-oxoglutarate synthase subunit KorC (189 aa).

Heterotetramer of the KorA, KorB, KorC and KorD subunits.

The catalysed reaction is 2 oxidized [2Fe-2S]-[ferredoxin] + 2-oxoglutarate + CoA = succinyl-CoA + 2 reduced [2Fe-2S]-[ferredoxin] + CO2 + H(+). This is 2-oxoglutarate synthase subunit KorC (korC) from Methanothermobacter thermautotrophicus (strain ATCC 29096 / DSM 1053 / JCM 10044 / NBRC 100330 / Delta H) (Methanobacterium thermoautotrophicum).